The primary structure comprises 256 residues: 1-(5-phosphoribosyl)-5-[(5-phosphoribosylamino)methylideneamino] imidazole-4-carboxamide isomerase (256 aa).

Catalysis depends on aspartate 8, which acts as the Proton acceptor. Aspartate 129 acts as the Proton donor in catalysis.

Belongs to the HisA/HisF family.

The protein localises to the cytoplasm. The catalysed reaction is 1-(5-phospho-beta-D-ribosyl)-5-[(5-phospho-beta-D-ribosylamino)methylideneamino]imidazole-4-carboxamide = 5-[(5-phospho-1-deoxy-D-ribulos-1-ylimino)methylamino]-1-(5-phospho-beta-D-ribosyl)imidazole-4-carboxamide. It participates in amino-acid biosynthesis; L-histidine biosynthesis; L-histidine from 5-phospho-alpha-D-ribose 1-diphosphate: step 4/9. The sequence is that of 1-(5-phosphoribosyl)-5-[(5-phosphoribosylamino)methylideneamino] imidazole-4-carboxamide isomerase from Synechococcus sp. (strain CC9311).